Here is a 1894-residue protein sequence, read N- to C-terminus: Plexin-A2 (1894 aa).

Positions 1–34 (MEQRRPWPRALEVDSRSVVLLSVVWVLLAPPAAG) are cleaved as a signal peptide. The region spanning 35-508 (MPQFSTFHSE…SERQVTRVPV (474 aa)) is the Sema domain. At 35-1237 (MPQFSTFHSE…VISDSLLTLP (1203 aa)) the chain is on the extracellular side. N-linked (GlcNAc...) asparagine glycosylation is found at asparagine 76 and asparagine 91. 10 disulfide bridges follow: cysteine 94–cysteine 103, cysteine 129–cysteine 137, cysteine 284–cysteine 405, cysteine 300–cysteine 356, cysteine 374–cysteine 393, cysteine 511–cysteine 528, cysteine 517–cysteine 559, cysteine 520–cysteine 537, cysteine 531–cysteine 543, and cysteine 594–cysteine 613. N-linked (GlcNAc...) asparagine glycosylation is present at asparagine 327. N-linked (GlcNAc...) asparagine glycosylation is found at asparagine 598, asparagine 696, and asparagine 756. IPT/TIG domains are found at residues 858-951 (PQIT…QYTF), 954-1037 (PSVL…QFEY), 1041-1139 (PRVQ…KFIY), and 1143-1228 (PTFE…SVSV). N-linked (GlcNAc...) asparagine glycosylation occurs at asparagine 1205. Residues 1238-1258 (AIVSIAAGGSLLLIIVIIVLI) form a helical membrane-spanning segment. Residues 1259–1894 (AYKRKSREND…QLINAMSIES (636 aa)) are Cytoplasmic-facing. A coiled-coil region spans residues 1261-1310 (KRKSRENDLTLKRLQMQMDNLESRVALECKEAFAELQTDINELTSDLDRS). Residue serine 1612 is modified to Phosphoserine.

This sequence belongs to the plexin family. In terms of assembly, homodimer. The PLXNA2 homodimer interacts with a SEMA6A homodimer, giving rise to a heterotetramer. Interacts directly with NRP1 and NRP2. Interacts with RND1. Detected in fetal brain.

It is found in the cell membrane. Coreceptor for SEMA3A and SEMA6A. Necessary for signaling by SEMA6A and class 3 semaphorins and subsequent remodeling of the cytoskeleton. Plays a role in axon guidance, invasive growth and cell migration. Class 3 semaphorins bind to a complex composed of a neuropilin and a plexin. The plexin modulates the affinity of the complex for specific semaphorins, and its cytoplasmic domain is required for the activation of down-stream signaling events in the cytoplasm. This Homo sapiens (Human) protein is Plexin-A2 (PLXNA2).